Here is a 385-residue protein sequence, read N- to C-terminus: Outer membrane protein assembly factor BamB (385 aa).

The N-terminal stretch at 1 to 20 is a signal peptide; that stretch reads MRKVLKKAALCTFGFSMLFG. Cys-21 carries N-palmitoyl cysteine lipidation. A lipid anchor (S-diacylglycerol cysteine) is attached at Cys-21.

This sequence belongs to the BamB family. In terms of assembly, part of the Bam complex.

Its subcellular location is the cell outer membrane. Its function is as follows. Part of the outer membrane protein assembly complex, which is involved in assembly and insertion of beta-barrel proteins into the outer membrane. The chain is Outer membrane protein assembly factor BamB from Aliivibrio fischeri (strain ATCC 700601 / ES114) (Vibrio fischeri).